The following is a 331-amino-acid chain: Myc-associated zinc finger protein (331 aa).

Disordered stretches follow at residues 46–65 (AQSP…APAA) and 108–131 (TVDT…SAPA). Pro residues predominate over residues 117-127 (PPAPPPPPPAV). 4 C2H2-type zinc fingers span residues 177-199 (YICA…EAIH), 266-288 (HACE…KLSH), 294-316 (YQCP…VRSH), and 324-331 (YNCSHCGK).

In terms of assembly, interacts with BPTF. As to expression, ubiquitously expressed.

The protein resides in the nucleus. Transcriptional regulator. Acts as a transcriptional activator that binds to purine-rich GAGA sites found in the promoter of many genes including insulin I and II and islet amyloid polypeptide. The sequence is that of Myc-associated zinc finger protein (MAZ) from Mesocricetus auratus (Golden hamster).